The following is a 35-amino-acid chain: Peptide ToHyp2 (35 aa).

The span at 1–29 (LPKPPLLPPPVPGLAPGLPPLPVPDPVPH) shows a compositional bias: pro residues. Residues 1 to 35 (LPKPPLLPPPVPGLAPGLPPLPVPDPVPHPPKKPP) form a disordered region. P5, P9, P10, P12, P16, P20, P31, and P35 each carry hydroxyproline.

Post-translationally, O-glycosylated; contains pentose side chains at some or all of the hydroxyproline residues. Glycosylation is required for full antifungal activity.

Antimicrobial peptide. Inhibits elongation of hyphae in B.sorokiniana (IC(50)=3.8 uM) but has no effect on this process or on germination of conidia in a panel of other phytopathogenic fungi. At concentrations above 10 uM, has antibacterial activity. This chain is Peptide ToHyp2, found in Taraxacum officinale (Common dandelion).